The primary structure comprises 574 residues: Galactose transporter (574 aa).

The tract at residues 1–57 (MAVEENNMPVVSQQPQAGEDVISSLSKDSHLSAQSQKYSNDELKAGESGSEGSQSVP) is disordered. The Cytoplasmic portion of the chain corresponds to 1 to 70 (MAVEENNMPV…PKKPMSEYVT (70 aa)). The segment covering 23 to 38 (SSLSKDSHLSAQSQKY) has biased composition (polar residues). A phosphoserine mark is found at Ser-32, Ser-35, Ser-39, Ser-48, Ser-50, Ser-53, and Ser-55. Residues 71–91 (VSLLCLCVAFGGFMFGWDTGT) form a helical membrane-spanning segment. Residues 92–121 (ISGFVVQTDFLRRFGMKHKDGTHYLSNVRT) lie on the Extracellular side of the membrane. The helical transmembrane segment at 122–142 (GLIVAIFNIGCAFGGIILSKG) threads the bilayer. The Cytoplasmic portion of the chain corresponds to 143-149 (GDMYGRK). Residues 150 to 170 (KGLSIVVSVYIVGIIIQIASI) form a helical membrane-spanning segment. At 171-175 (NKWYQ) the chain is on the extracellular side. Residues 176-196 (YFIGRIISGLGVGGIAVLCPM) traverse the membrane as a helical segment. Over 197 to 207 (LISEIAPKHLR) the chain is Cytoplasmic. A helical membrane pass occupies residues 208–228 (GTLVSCYQLMITAGIFLGYCT). Residues 229–242 (NYGTKSYSNSVQWR) lie on the Extracellular side of the membrane. A helical transmembrane segment spans residues 243–263 (VPLGLCFAWSLFMIGALTLVP). The Cytoplasmic segment spans residues 264–342 (ESPRYLCEVN…MGVFVQMFQQ (79 aa)). A helical membrane pass occupies residues 343–362 (LTGNNYFFYYGTVIFKSVGL). Over 363–366 (DDSF) the chain is Extracellular. The chain crosses the membrane as a helical span at residues 367–387 (ETSIVIGVVNFASTFFSLWTV). At 388–394 (ENLGHRK) the chain is on the cytoplasmic side. The helical transmembrane segment at 395 to 415 (CLLLGAATMMACMVIYASVGV) threads the bilayer. At 416-435 (TRLYPHGKSQPSSKGAGNCM) the chain is on the extracellular side. Residues 436-456 (IVFTCFYIFCYATTWAPVAWV) traverse the membrane as a helical segment. Residues 457–472 (ITAESFPLRVKSKCMA) are Cytoplasmic-facing. Residues 473 to 493 (LASASNWVWGFLIAFFTPFIT) traverse the membrane as a helical segment. Residues 494 to 499 (SAINFY) are Extracellular-facing. The helical transmembrane segment at 500–520 (YGYVFMGCLVAMFFYVFFFVP) threads the bilayer. The Cytoplasmic segment spans residues 521–574 (ETKGLSLEEIQELWEEGVLPWKSEGWIPSSRRGNNYDLEDLQHDDKPWYKAMLE).

It belongs to the major facilitator superfamily. Sugar transporter (TC 2.A.1.1) family.

It localises to the membrane. GAL2 is a facilitated diffusion transporter required for both the high-affinity galactokinase-dependent and low-affinity galactokinase-independent galactose transport processes. The protein is Galactose transporter (GAL2) of Saccharomyces cerevisiae (strain ATCC 204508 / S288c) (Baker's yeast).